Here is a 293-residue protein sequence, read N- to C-terminus: Magnetosome protein MamB (293 aa).

Residues 1–12 (MTTAACRKCRDE) lie on the Cytoplasmic side of the membrane. Residues 1 to 214 (MTTAACRKCR…GLMDTSVEND (214 aa)) form a transmembrane domain (TMD) region. A helical transmembrane segment spans residues 13–33 (VIWWAFFINIGQTTYKGVLGV). Residues 34–78 (LSGSAALVADAMHSGADVVATLVTMFSVKVSDKKADEKYPFGYGN) lie on the Lumenal side of the membrane. The helical transmembrane segment at 79–99 (IQFIASSIVGLILFFGALYLM) threads the bilayer. At 100-105 (YESTMQ) the chain is on the cytoplasmic side. Residues 106–126 (IIAGNTSSPSPFAVLGAIVSI) traverse the membrane as a helical segment. At 127–158 (ATNELMFRYQSCVGRQNNSPAIIANAWDNRSD) the chain is on the lumenal side. Residues 159-179 (ALSSVAVLIGIVAAVVGFPIA) traverse the membrane as a helical segment. Topologically, residues 180 to 293 (DRLAAIGVGI…VGVTPVRIAA (114 aa)) are cytoplasmic. A C-terminal domain (CTD) region spans residues 215-293 (VLVDAYNIAK…VGVTPVRIAA (79 aa)). Positions 245, 247, and 283 each coordinate Zn(2+).

Belongs to the cation diffusion facilitator (CDF) transporter (TC 2.A.4) family. In terms of assembly, the isolated C-terminal domain (approximately 213-293) forms homodimers. Forms heterodimers with MamM.

The protein resides in the magnetosome membrane. Plays a dual, essential role in magnetosome formation; required for magnetosome vesicle formation as well as biomineralization. Probably binds and transports iron. Requires heterodimerization with MamM for stability. This chain is Magnetosome protein MamB (mamB), found in Magnetospira sp. (strain QH-2) (Marine magnetic spirillum (strain QH-2)).